Here is a 782-residue protein sequence, read N- to C-terminus: Vacuolar import and degradation protein 27 (782 aa).

3 positions are modified to phosphoserine: Ser170, Ser195, and Ser196. Positions 188–200 (DDDDELDSSSDDF) are enriched in acidic residues. The disordered stretch occupies residues 188–215 (DDDDELDSSSDDFQDAKDTSFEHEKESE). The span at 201 to 215 (QDAKDTSFEHEKESE) shows a compositional bias: basic and acidic residues. Ser222 carries the phosphoserine modification. Residues 372–384 (DDRSNEERDKESS) show a composition bias toward basic and acidic residues. Positions 372–422 (DDRSNEERDKESSESENDSEDEDDENDHSKRIISSEAFEEPRRATSKGNSS) are disordered. The span at 385–397 (ESENDSEDEDDEN) shows a compositional bias: acidic residues. The residue at position 486 (Thr486) is a Phosphothreonine.

This sequence belongs to the VID27 family.

The protein resides in the cytoplasm. Functionally, has a role in the negative regulation of gluconeogenesis. Required for vacuolar catabolite degradation of fructose-1,6-bisphosphatase (FBPase). The polypeptide is Vacuolar import and degradation protein 27 (VID27) (Saccharomyces cerevisiae (strain ATCC 204508 / S288c) (Baker's yeast)).